The sequence spans 116 residues: Nitrogenase-stabilizing/protective protein NifW (116 aa).

It belongs to the NifW family. Homotrimer; associates with NifD.

In terms of biological role, may protect the nitrogenase Fe-Mo protein from oxidative damage. The protein is Nitrogenase-stabilizing/protective protein NifW of Rhodopseudomonas palustris (strain TIE-1).